Consider the following 281-residue polypeptide: Beta-etherase (281 aa).

The region spanning 11-87 (DLQLESGCTI…YLDEKYPDRP (77 aa)) is the GST N-terminal domain. Residues 244 to 281 (GDPEPFVRQTGPAGAGGQALNKGPQTTKMPPRVAEKAD) are disordered.

This sequence belongs to the GST superfamily.

It is found in the cell inner membrane. Functionally, able to degrade various dimeric lignin compounds. Catalyzes the unique and reductive cleavage of arylglycerol-beta-aryl ether. The polypeptide is Beta-etherase (ligE) (Sphingobium sp. (strain NBRC 103272 / SYK-6)).